The sequence spans 437 residues: tRNA(Ile)-lysidine synthase (437 aa).

ATP is bound at residue 22–27; the sequence is SGGLDS.

The protein belongs to the tRNA(Ile)-lysidine synthase family.

It is found in the cytoplasm. The catalysed reaction is cytidine(34) in tRNA(Ile2) + L-lysine + ATP = lysidine(34) in tRNA(Ile2) + AMP + diphosphate + H(+). Its function is as follows. Ligates lysine onto the cytidine present at position 34 of the AUA codon-specific tRNA(Ile) that contains the anticodon CAU, in an ATP-dependent manner. Cytidine is converted to lysidine, thus changing the amino acid specificity of the tRNA from methionine to isoleucine. This is tRNA(Ile)-lysidine synthase from Xylella fastidiosa (strain 9a5c).